The chain runs to 179 residues: Replication restart protein DnaT (179 aa).

The disordered stretch occupies residues 156–179 (GGLPKRDVNTVSEPDSQIPPGFRG).

This sequence belongs to the DnaT family. In terms of assembly, homooligomerizes. Interacts with PriB. Component of the replication restart primosome. Primosome assembly occurs via a 'hand-off' mechanism. PriA binds to replication forks, subsequently PriB then DnaT bind; DnaT then displaces ssDNA to generate the helicase loading substrate.

Involved in the restart of stalled replication forks, which reloads the replicative helicase on sites other than the origin of replication. Can function in multiple replication restart pathways. Displaces ssDNA from a PriB-ssDNA complex. Probably forms a spiral filament on ssDNA. In Escherichia coli O17:K52:H18 (strain UMN026 / ExPEC), this protein is Replication restart protein DnaT.